A 618-amino-acid chain; its full sequence is Cationic amino acid transporter 3 (618 aa).

The Cytoplasmic segment spans residues 1-36 (MLWQALRRFGQKLVRRRVLELGMGETRLARCLSTLD). A helical membrane pass occupies residues 37-57 (LVALGVGSTLGAGVYVLAGEV). Residues 58 to 61 (AKDK) lie on the Extracellular side of the membrane. The chain crosses the membrane as a helical span at residues 62–82 (AGPSIVICFLVAALSSVLAGL). The Cytoplasmic portion of the chain corresponds to 83–107 (CYAEFGARVPGSGSAYLYSYVTVGE). The chain crosses the membrane as a helical span at residues 108 to 128 (LWAFTTGWNLILSYVIGTASV). Topologically, residues 129–162 (ARAWSSAFDNLIGNHISRTLKGTILLKMPHVLAE) are extracellular. The helical transmembrane segment at 163–183 (YPDFFALALVLLLTGLLVLGA) threads the bilayer. Residues 184-191 (SKSALVTK) are Cytoplasmic-facing. The helical transmembrane segment at 192–212 (VFTGMNLLVLSFVIISGFIKG) threads the bilayer. Topologically, residues 213–244 (ELRNWKLTKEDYCLTMSESNGTCSLDSMGSGG) are extracellular. N-linked (GlcNAc...) asparagine glycosylation is present at N232. The helical transmembrane segment at 245 to 265 (FMPFGLEGILRGAATCFYAFV) threads the bilayer. Residues 266-285 (GFDCIATTGEEAQNPQRSIP) lie on the Cytoplasmic side of the membrane. Residues 286–306 (MGIVISMFICFLAYFGVSSAL) traverse the membrane as a helical segment. Over 307-335 (TLMMPYYKLHPESPLPEAFSYVGWEPARY) the chain is Extracellular. The chain crosses the membrane as a helical span at residues 336 to 356 (LVAIGSLCALSTSLLGSMFPM). The Cytoplasmic segment spans residues 357–380 (PRVMYSMAEDGLLFRVLAKVHSVT). The chain crosses the membrane as a helical span at residues 381–401 (HIPIVATLVSGVIAAFMAFLF). At 402–406 (ELTDL) the chain is on the extracellular side. The chain crosses the membrane as a helical span at residues 407-427 (VDLMSIGTLLAHSLVSICVLI). Residues 428–474 (LRYQPDQEMKSVEEEMELQEETLEAEKLTVQALFCPVNSIPTLLSGR) are Cytoplasmic-facing. The chain crosses the membrane as a helical span at residues 475–495 (VVYVCSSLLAVLLTVLCLVLT). The Extracellular segment spans residues 496–506 (WWTTPLRSGDP). A helical transmembrane segment spans residues 507-527 (VWVTVVVLILGLILAISGVIW). The Cytoplasmic portion of the chain corresponds to 528-539 (RQPQNRTPLHFK). The chain crosses the membrane as a helical span at residues 540–560 (VPAVPLLPLVSIFVNVYLMMQ). The Extracellular segment spans residues 561–568 (MTAGTWAR). A helical transmembrane segment spans residues 569-589 (FGIWMLIGFAIYFGYGIQHSM). Over 590–618 (KEVKNHQTLPKTRAQTIDLDLTTSCVHSI) the chain is Cytoplasmic. Phosphothreonine is present on T605. S617 bears the Phosphoserine mark.

Belongs to the amino acid-polyamine-organocation (APC) superfamily. Cationic amino acid transporter (CAT) (TC 2.A.3.3) family. N-glycosylated. In terms of tissue distribution, expressed in adult brain and in a wide variety of embryonic tissues.

It localises to the cell membrane. It carries out the reaction L-arginine(in) = L-arginine(out). The catalysed reaction is L-lysine(in) = L-lysine(out). The enzyme catalyses L-ornithine(in) = L-ornithine(out). Uniporter that mediates the uptake of cationic L-amino acids such as L-arginine, L-lysine and L-ornithine. The transport is sodium ions- and pH-independent, moderately trans-stimulated and is mediated by passive diffusion. This chain is Cationic amino acid transporter 3, found in Mus musculus (Mouse).